A 119-amino-acid polypeptide reads, in one-letter code: Large ribosomal subunit protein bL20 (119 aa).

Belongs to the bacterial ribosomal protein bL20 family.

Functionally, binds directly to 23S ribosomal RNA and is necessary for the in vitro assembly process of the 50S ribosomal subunit. It is not involved in the protein synthesizing functions of that subunit. The protein is Large ribosomal subunit protein bL20 of Cellvibrio japonicus (strain Ueda107) (Pseudomonas fluorescens subsp. cellulosa).